We begin with the raw amino-acid sequence, 272 residues long: Insulin-like growth factor-binding protein 1 (272 aa).

A signal peptide spans 1 to 25 (MPEFLTVVSWPFLILLSFQVRVVAG). One can recognise an IGFBP N-terminal domain in the interval 28–109 (QPWHCAPCTA…TRGQGACVLE (82 aa)). Disulfide bonds link cysteine 32-cysteine 59, cysteine 35-cysteine 61, cysteine 43-cysteine 62, cysteine 50-cysteine 65, cysteine 73-cysteine 86, and cysteine 80-cysteine 106. The tract at residues 115–143 (TSSLSGSQHEEAKAAVASEDELAESPEMT) is disordered. Positions 132–143 (SEDELAESPEMT) are enriched in acidic residues. Serine 139, serine 157, and serine 169 each carry phosphoserine. Threonine 170 carries the post-translational modification Phosphothreonine. At tyrosine 171 the chain carries Phosphotyrosine. The Thyroglobulin type-1 domain maps to 186-264 (KEPCQRELYK…SLETRGDPNC (79 aa)). Intrachain disulfides connect cysteine 189-cysteine 219, cysteine 230-cysteine 241, and cysteine 243-cysteine 264. The residue at position 255 (serine 255) is a Phosphoserine. A Cell attachment site motif is present at residues 259–261 (RGD).

As to quaternary structure, binds equally well IGF1 and IGF2. Interacts with integrin ITGA5:ITGB1. Interacts with VHL; this interaction inhibits HIF1A degradation.

It localises to the secreted. In terms of biological role, multifunctional protein that plays a critical role in regulating the availability of IGFs such as IGF1 and IGF2 to their receptors and thereby regulates IGF-mediated cellular processes including cell migration, proliferation, differentiation or apoptosis in a cell-type specific manner. Also plays a positive role in cell migration by interacting with integrin ITGA5:ITGB1 through its RGD motif. Mechanistically, binding to integrins leads to activation of focal adhesion kinase/PTK2 and stimulation of the mitogen-activated protein kinase (MAPK) pathway. Regulates cardiomyocyte apoptosis by suppressing HIF-1alpha/HIF1A ubiquitination and subsequent degradation. This chain is Insulin-like growth factor-binding protein 1 (Igfbp1), found in Rattus norvegicus (Rat).